The primary structure comprises 268 residues: Undecaprenyl-diphosphatase (268 aa).

7 helical membrane-spanning segments follow: residues 42–62 (VPGK…ICVL), 86–106 (AIFV…DFIL), 108–128 (VLFT…AIVV), 158–178 (IALV…LLVG), 184–204 (AAEF…VVSL), 218–238 (LIAA…KWLV), and 246–266 (FTVF…YFSL).

This sequence belongs to the UppP family.

The protein resides in the cell inner membrane. The enzyme catalyses di-trans,octa-cis-undecaprenyl diphosphate + H2O = di-trans,octa-cis-undecaprenyl phosphate + phosphate + H(+). Catalyzes the dephosphorylation of undecaprenyl diphosphate (UPP). Confers resistance to bacitracin. This chain is Undecaprenyl-diphosphatase, found in Parvibaculum lavamentivorans (strain DS-1 / DSM 13023 / NCIMB 13966).